Here is an 842-residue protein sequence, read N- to C-terminus: Putative G-type lectin S-receptor-like serine/threonine-protein kinase At1g61610 (842 aa).

Positions 1-22 (MAGFNRNLTLVTTLLIFHQLCS) are cleaved as a signal peptide. N7, N23, N35, N60, N110, N123, N304, N351, and N380 each carry an N-linked (GlcNAc...) asparagine glycan. The Extracellular segment spans residues 23 to 443 (NVSCSTSNSF…KLGGGKENST (421 aa)). A Bulb-type lectin domain is found at 29-150 (SNSFTRNHTI…SDRRKWYWES (122 aa)). An EGF-like domain is found at 292–331 (PSTECEKYNRCGNYSVCDDSKEFDSGKCSCIDGFEPVHQD). 2 cysteine pairs are disulfide-bonded: C296–C308 and C302–C319. In terms of domain architecture, PAN spans 350 to 431 (CNQSLVAGQE…GGNSINIRLA (82 aa)). 2 disulfides stabilise this stretch: C385–C406 and C389–C395. N441 carries N-linked (GlcNAc...) asparagine glycosylation. A helical membrane pass occupies residues 444 to 464 (LWIIVFSVIGAFLLGLCIWIL). The Cytoplasmic portion of the chain corresponds to 465 to 842 (WKFKKSLKAF…DVTFTTIVGR (378 aa)). Residues 525-814 (FAEENKLGQG…PRQPTFHSFL (290 aa)) enclose the Protein kinase domain. ATP-binding positions include 531-539 (LGQGGFGTV) and K553. At S559 the chain carries Phosphoserine. The caM-binding stretch occupies residues 614–631 (SKQGSLDWRKRWEVIGGI). Residue D650 is the Proton acceptor of the active site. A phosphoserine mark is found at S654 and S667. T684 carries the phosphothreonine modification. S728 and S830 each carry phosphoserine. T837 bears the Phosphothreonine mark.

This sequence belongs to the protein kinase superfamily. Ser/Thr protein kinase family.

The protein localises to the cell membrane. It catalyses the reaction L-seryl-[protein] + ATP = O-phospho-L-seryl-[protein] + ADP + H(+). It carries out the reaction L-threonyl-[protein] + ATP = O-phospho-L-threonyl-[protein] + ADP + H(+). The polypeptide is Putative G-type lectin S-receptor-like serine/threonine-protein kinase At1g61610 (Arabidopsis thaliana (Mouse-ear cress)).